Consider the following 952-residue polypeptide: DNA topoisomerase 1 (952 aa).

One can recognise a Toprim domain in the interval 12–135; that stretch reads RRLVIVESPA…VKRMVFHEIT (124 aa). The Mg(2+) site is built by Glu-18 and Asp-104. A Topo IA-type catalytic domain is found at 150-602; the sequence is NQKLVDAQET…RFYFGEGDGT (453 aa). The interaction with DNA stretch occupies residues 184 to 189; sequence SAGRVQ. Tyr-334 (O-(5'-phospho-DNA)-tyrosine intermediate) is an active-site residue. The tract at residues 847–952 is disordered; that stretch reads RFGPYVTDGE…KATASKTSED (106 aa). A compositionally biased stretch (basic and acidic residues) spans 871 to 884; sequence TPERGYELLAEKRA. Basic residues predominate over residues 885-906; the sequence is KGPAKKTAKKAVKKTAAKKAPA. Low complexity-rich tracts occupy residues 907 to 930 and 937 to 952; these read KKAA…AAKS and AKTA…TSED.

This sequence belongs to the type IA topoisomerase family. As to quaternary structure, monomer. Requires Mg(2+) as cofactor.

It catalyses the reaction ATP-independent breakage of single-stranded DNA, followed by passage and rejoining.. In terms of biological role, releases the supercoiling and torsional tension of DNA, which is introduced during the DNA replication and transcription, by transiently cleaving and rejoining one strand of the DNA duplex. Introduces a single-strand break via transesterification at a target site in duplex DNA. The scissile phosphodiester is attacked by the catalytic tyrosine of the enzyme, resulting in the formation of a DNA-(5'-phosphotyrosyl)-enzyme intermediate and the expulsion of a 3'-OH DNA strand. The free DNA strand then undergoes passage around the unbroken strand, thus removing DNA supercoils. Finally, in the religation step, the DNA 3'-OH attacks the covalent intermediate to expel the active-site tyrosine and restore the DNA phosphodiester backbone. Functionally, relaxes supercoiled plasmid in vitro; in the presence of sIHF (integration host factor) relaxation is decreased. In Streptomyces coelicolor (strain ATCC BAA-471 / A3(2) / M145), this protein is DNA topoisomerase 1.